The sequence spans 55 residues: MAAKTDIRPKITLACQECKHRNYITRKNRRNDPDRLELKKYCPHCNKHQVHRETR.

It belongs to the bacterial ribosomal protein bL33 family.

This is Large ribosomal subunit protein bL33 from Acidothermus cellulolyticus (strain ATCC 43068 / DSM 8971 / 11B).